The primary structure comprises 247 residues: Fibroblast growth factor 14 (247 aa).

Disordered stretches follow at residues 1–38 (MAAAIASGLIRQKRQAREQHWDRPSASRRRSSPSKNRG) and 216–247 (ETVPKAGVTPSKSTSASAIMNGGKPVNKCKTT). Over residues 15–25 (QAREQHWDRPS) the composition is skewed to basic and acidic residues.

It belongs to the heparin-binding growth factors family. Interacts with SCN8A.

The protein localises to the nucleus. In terms of biological role, probably involved in nervous system development and function. This is Fibroblast growth factor 14 (Fgf14) from Rattus norvegicus (Rat).